We begin with the raw amino-acid sequence, 146 residues long: MGNHLDGSYLPNTVMSIEDKQNTYNEAKEDSKICNKIYIKQSGKIDKKELKRIKKLDFFYSQKNDDEIERMFMNKPNGTFLLTDDATDENLFLVQKDLENGSLNIAKLDFNGKALYINGKNYFSLENYLKTVEDFYKYPLIYDENK.

Belongs to the asfivirus MGF 100 family.

Functionally, plays a role in virus cell tropism, and may be required for efficient virus replication in macrophages. The chain is Protein MGF 100-3L from Ornithodoros (relapsing fever ticks).